The following is a 292-amino-acid chain: Beta-lactamase-like protein 2 homolog (292 aa).

Zn(2+) is bound by residues H76, H78, D80, H81, H145, D163, and H198.

This sequence belongs to the metallo-beta-lactamase superfamily. Glyoxalase II family.

The sequence is that of Beta-lactamase-like protein 2 homolog from Drosophila melanogaster (Fruit fly).